The following is a 213-amino-acid chain: Protein Tpen_0748 (213 aa).

The AMMECR1 domain occupies 7 to 207 (EEGALLVRLA…ETTPKGDVVE (201 aa)).

This chain is Protein Tpen_0748, found in Thermofilum pendens (strain DSM 2475 / Hrk 5).